A 191-amino-acid polypeptide reads, in one-letter code: Calcium and integrin-binding protein 1 (191 aa).

Glycine 2 carries N-myristoyl glycine lipidation. EF-hand domains follow at residues threonine 103–glutamate 138 and glutamate 148–phenylalanine 183. The Ca(2+) site is built by aspartate 116, aspartate 118, aspartate 120, threonine 122, aspartate 127, aspartate 161, aspartate 163, aspartate 165, threonine 167, and glutamate 172. Phosphoserine is present on aspartate 118.

As to quaternary structure, monomer. Interacts with MYO1C. Interacts (via C-terminal region) with PPP3R1 and CACNA1C; the interactions increase upon cardiomyocytes hypertrophy. Interacts with the heterodimeric integrin alpha-IIb/beta3 (ITGA2B-ITGB3). Interacts with ITGA2B (via cytoplasmic domain); the interaction is direct and calcium-dependent. Interacts with the protein kinases PLK2/SNK and PRKDC (via the region immediately upstream of the kinase domain). Interacts with PLK3; the interaction inhibits PLK3 kinase activity. Interacts with PSEN2. Interacts (via C-terminus) with F8. Interacts with NBR1 (via C-terminus). Interacts with FEZ1 (via C-terminus). Interacts with UBR5 (via C-terminus); the interaction is sensitive to DNA damage, and may target CIB1 for ubiquitin-mediated degradation. Interacts with IFI6; the interaction is direct. Interacts with BCL2. Interacts with ITPR3; the interaction occurs in a calcium-dependent manner. Interacts with PTK2/FAK1. Interacts with MAP3K5; the interaction inhibits MAP3K5 activation by phosphorylation, and its subsequent interaction with TRAF2. Isoform 2 interacts with PRKD2 (via N-terminal AP-rich region), PTK2/FAK1 and PAK1. Interacts with TAS1R2 (via C-terminus); the interaction is independent of the myristoylation state of CIB1. Interacts (via C-terminal region) with STMN2 (via the N-terminal region); the interaction is direct, occurs in a calcium-dependent manner and attenuates the STMN2-induced neurite outgrowth inhibition. Interacts with SPHK1, the interaction occurs in a calcium-dependent manner. Interacts with ITGA2B (via C-terminal cytoplasmic tail); the interaction occurs upon platelet aggregation and is stabilized/increased in a calcium and magnesium-dependent manner. Interacts with PAK1 (via N-terminal region); the interaction is direct and occurs in a calcium-dependent manner. Interacts with RAC3 (via C-terminal region); the interaction induces their association with the cytoskeleton upon alpha-IIb/beta3 integrin-mediated adhesion. Interacts with ITGA5 and ITGAV. Interacts and forms a complex with TMC6 and TMC8; the interaction stabilizes each component of the complex. In terms of assembly, (Microbial infection) Interacts with human papillomavirus 4/HPV4 protein E8, human papillomavirus 5/HPV5 protein E1, and human papillomavirus 16/HPV16 proteins E2 and E5. Post-translationally, phosphorylation of isoform 2 at Ser-118 by PRKD2 increases its ability to stimulate tumor angiogenesis. In terms of tissue distribution, ubiquitously expressed. Expressed in the epidermis, hair follicles and keratinocytes. Detected in platelets and in cell lines of megakaryocytic and erythrocytic lineages. Both isoform 1 and isoform 2 are detected in various cancer cell lines, with isoform 2 being the predominant form (at protein level).

The protein localises to the membrane. It localises to the cell membrane. Its subcellular location is the sarcolemma. It is found in the apical cell membrane. The protein resides in the cell projection. The protein localises to the ruffle membrane. It localises to the filopodium tip. Its subcellular location is the growth cone. It is found in the lamellipodium. The protein resides in the cytoplasm. The protein localises to the cytoskeleton. It localises to the microtubule organizing center. Its subcellular location is the centrosome. It is found in the perinuclear region. The protein resides in the nucleus. The protein localises to the neuron projection. It localises to the perikaryon. Its subcellular location is the golgi apparatus. It is found in the trans-Golgi network. Functionally, calcium-binding protein that plays a role in the regulation of numerous cellular processes, such as cell differentiation, cell division, cell proliferation, cell migration, thrombosis, angiogenesis, cardiac hypertrophy and apoptosis. Involved in bone marrow megakaryocyte differentiation by negatively regulating thrombopoietin-mediated signaling pathway. Participates in the endomitotic cell cycle of megakaryocyte, a form of mitosis in which both karyokinesis and cytokinesis are interrupted. Plays a role in integrin signaling by negatively regulating alpha-IIb/beta3 activation in thrombin-stimulated megakaryocytes preventing platelet aggregation. Up-regulates PTK2/FAK1 activity, and is also needed for the recruitment of PTK2/FAK1 to focal adhesions; it thus appears to play an important role in focal adhesion formation. Positively regulates cell migration on fibronectin in a CDC42-dependent manner, the effect being negatively regulated by PAK1. Functions as a negative regulator of stress activated MAP kinase (MAPK) signaling pathways. Down-regulates inositol 1,4,5-trisphosphate receptor-dependent calcium signaling. Involved in sphingosine kinase SPHK1 translocation to the plasma membrane in a N-myristoylation-dependent manner preventing TNF-alpha-induced apoptosis. Regulates serine/threonine-protein kinase PLK3 activity for proper completion of cell division progression. Plays a role in microtubule (MT) dynamics during neuronal development; disrupts the MT depolymerization activity of STMN2 attenuating NGF-induced neurite outgrowth and the MT reorganization at the edge of lamellipodia. Promotes cardiomyocyte hypertrophy via activation of the calcineurin/NFAT signaling pathway. Stimulates calcineurin PPP3R1 activity by mediating its anchoring to the sarcolemma. In ischemia-induced (pathological or adaptive) angiogenesis, stimulates endothelial cell proliferation, migration and microvessel formation by activating the PAK1 and ERK1/ERK2 signaling pathway. Also promotes cancer cell survival and proliferation. May regulate cell cycle and differentiation of spermatogenic germ cells, and/or differentiation of supporting Sertoli cells. Forms a complex with TMC6/EVER1 and TMC8/EVER2 in lymphocytes and keratynocytes where CIB1 stabilizes TMC6 and TMC8 levels and reciprocally. Its function is as follows. Acts as a restriction factor that promotes keratinocyte-intrinsic immunity to human beta-papillomaviruses (HPVs). Plays a regulatory role in angiogenesis and tumor growth by mediating PKD/PRKD2-induced vascular endothelial growth factor A (VEGFA) secretion. The chain is Calcium and integrin-binding protein 1 (CIB1) from Homo sapiens (Human).